The sequence spans 436 residues: Flagellum-specific ATP synthase (436 aa).

Residue 165–172 (SGSGVGKS) participates in ATP binding.

The protein belongs to the ATPase alpha/beta chains family.

Its subcellular location is the cytoplasm. The enzyme catalyses ATP + H2O + 4 H(+)(in) = ADP + phosphate + 5 H(+)(out). In terms of biological role, probable catalytic subunit of a protein translocase for flagellum-specific export, or a proton translocase involved in local circuits at the flagellum. May be involved in a specialized protein export pathway that proceeds without signal peptide cleavage. In Borreliella burgdorferi (strain ATCC 35210 / DSM 4680 / CIP 102532 / B31) (Borrelia burgdorferi), this protein is Flagellum-specific ATP synthase (fliI).